The following is a 296-amino-acid chain: Malate--CoA ligase subunit alpha (296 aa).

CoA contacts are provided by residues 17-20 (TGDK), K43, and 96-98 (ITD). H251 serves as the catalytic Tele-phosphohistidine intermediate.

The protein belongs to the succinate/malate CoA ligase alpha subunit family. In terms of assembly, heterotetramer of two alpha and two beta subunits.

It carries out the reaction (S)-malate + ATP + CoA = (S)-malyl-CoA + ADP + phosphate. The protein operates within one-carbon metabolism; formaldehyde assimilation via serine pathway. In Methylorubrum extorquens (strain ATCC 14718 / DSM 1338 / JCM 2805 / NCIMB 9133 / AM1) (Methylobacterium extorquens), this protein is Malate--CoA ligase subunit alpha (mtkB).